We begin with the raw amino-acid sequence, 91 residues long: PqqA binding protein (91 aa).

It belongs to the PqqD family. Monomer. Interacts with PqqE.

Its pathway is cofactor biosynthesis; pyrroloquinoline quinone biosynthesis. Functionally, functions as a PqqA binding protein and presents PqqA to PqqE, in the pyrroloquinoline quinone (PQQ) biosynthetic pathway. The polypeptide is PqqA binding protein (Pseudomonas fluorescens (strain SBW25)).